The chain runs to 244 residues: 3-deoxy-manno-octulosonate cytidylyltransferase (244 aa).

This sequence belongs to the KdsB family.

The protein resides in the cytoplasm. The enzyme catalyses 3-deoxy-alpha-D-manno-oct-2-ulosonate + CTP = CMP-3-deoxy-beta-D-manno-octulosonate + diphosphate. It functions in the pathway nucleotide-sugar biosynthesis; CMP-3-deoxy-D-manno-octulosonate biosynthesis; CMP-3-deoxy-D-manno-octulosonate from 3-deoxy-D-manno-octulosonate and CTP: step 1/1. It participates in bacterial outer membrane biogenesis; lipopolysaccharide biosynthesis. Activates KDO (a required 8-carbon sugar) for incorporation into bacterial lipopolysaccharide in Gram-negative bacteria. This Dichelobacter nodosus (strain VCS1703A) protein is 3-deoxy-manno-octulosonate cytidylyltransferase.